Here is a 277-residue protein sequence, read N- to C-terminus: MDIIQAIIIGIVQGLTEFLPVSSSAHLIFAQNALGVESSLAFDVFLHLGSLIAVLWFFRADIIRMIQAFLLSIGDIIQHRFKEGFYSDPYKRLVWYVIIATIPVGLVGVLFESQVESLFAGALYVPAFFLFVTGTILYLSQRMNSGEVDLSNLSLKESIFMGLGQACAILPGLSRSGTTIAAGLVIGLDKEFAAKFSFILSIPAILGAFVVQLKDIGTITDFNALAILFGFLAALISGYLAIKWLLELIQKRSLDIFAYYCWIVGIIVFMGSITHLF.

Transmembrane regions (helical) follow at residues 1–21 (MDII…FLPV), 38–58 (SSLA…LWFF), 93–113 (LVWY…LFES), 118–138 (LFAG…TILY), 168–188 (AILP…VIGL), 191–211 (EFAA…AFVV), 222–242 (FNAL…YLAI), and 256–276 (IFAY…ITHL).

It belongs to the UppP family.

It localises to the cell membrane. It carries out the reaction di-trans,octa-cis-undecaprenyl diphosphate + H2O = di-trans,octa-cis-undecaprenyl phosphate + phosphate + H(+). Its function is as follows. Catalyzes the dephosphorylation of undecaprenyl diphosphate (UPP). In Methanobrevibacter smithii (strain ATCC 35061 / DSM 861 / OCM 144 / PS), this protein is Undecaprenyl-diphosphatase.